A 307-amino-acid chain; its full sequence is Ornithine carbamoyltransferase (307 aa).

Residues 53 to 56, Gln-80, Arg-104, and 131 to 134 contribute to the carbamoyl phosphate site; these read STRT and HPCQ. Residues Asn-162, Asp-219, and 223 to 224 each bind L-ornithine; that span reads SM. Carbamoyl phosphate-binding positions include 259–260 and Arg-287; that span reads CL.

This sequence belongs to the aspartate/ornithine carbamoyltransferase superfamily. OTCase family.

It localises to the cytoplasm. It catalyses the reaction carbamoyl phosphate + L-ornithine = L-citrulline + phosphate + H(+). Its pathway is amino-acid biosynthesis; L-arginine biosynthesis; L-arginine from L-ornithine and carbamoyl phosphate: step 1/3. In terms of biological role, reversibly catalyzes the transfer of the carbamoyl group from carbamoyl phosphate (CP) to the N(epsilon) atom of ornithine (ORN) to produce L-citrulline. The sequence is that of Ornithine carbamoyltransferase from Psychrobacter arcticus (strain DSM 17307 / VKM B-2377 / 273-4).